The primary structure comprises 73 residues: Small ribosomal subunit protein bS18 (73 aa).

It belongs to the bacterial ribosomal protein bS18 family. In terms of assembly, part of the 30S ribosomal subunit. Forms a tight heterodimer with protein bS6.

Functionally, binds as a heterodimer with protein bS6 to the central domain of the 16S rRNA, where it helps stabilize the platform of the 30S subunit. This chain is Small ribosomal subunit protein bS18, found in Prochlorococcus marinus subsp. pastoris (strain CCMP1986 / NIES-2087 / MED4).